A 219-amino-acid polypeptide reads, in one-letter code: uncharacterized protein (219 aa).

Phosphoserine is present on Ser-23. A Glycyl lysine isopeptide (Lys-Gly) (interchain with G-Cter in SUMO) cross-link involves residue Lys-137.

The protein localises to the cytoplasm. This is an uncharacterized protein from Saccharomyces cerevisiae (strain ATCC 204508 / S288c) (Baker's yeast).